Consider the following 200-residue polypeptide: Snake venom metalloproteinase BmooMP-I (200 aa).

The Peptidase M12B domain occupies 5–200 (RYIELAVVAD…HNPQCILNEP (196 aa)). Ca(2+)-binding residues include E8 and D92. 3 disulfide bridges follow: C116/C195, C155/C179, and C157/C162. H141 is a binding site for Zn(2+). E142 is an active-site residue. Residues H145 and H151 each contribute to the Zn(2+) site. Ca(2+) contacts are provided by C195 and N198.

It belongs to the venom metalloproteinase (M12B) family. P-I subfamily. As to quaternary structure, monomer. The cofactor is Zn(2+). As to expression, expressed by the venom gland.

Its subcellular location is the secreted. Functionally, zinc metalloprotease that displays fibrinogenolytic, gelatinase and weak hemorrhagic activities. Degrades the three chain of fibrinogen Aalpha-chain (FGA), Bbeta-chain (FGB), and gamma (FGG). The protein is Snake venom metalloproteinase BmooMP-I of Bothrops moojeni (Lance-headed viper).